A 543-amino-acid chain; its full sequence is Probable malate:quinone oxidoreductase (543 aa).

It belongs to the MQO family. FAD serves as cofactor.

It carries out the reaction (S)-malate + a quinone = a quinol + oxaloacetate. It participates in carbohydrate metabolism; tricarboxylic acid cycle; oxaloacetate from (S)-malate (quinone route): step 1/1. The protein is Probable malate:quinone oxidoreductase of Acinetobacter baylyi (strain ATCC 33305 / BD413 / ADP1).